A 162-amino-acid polypeptide reads, in one-letter code: Transcription antitermination protein RfaH (162 aa).

Belongs to the RfaH family. As to quaternary structure, interacts with both the nontemplate DNA and the RNA polymerase (RNAP).

Its function is as follows. Enhances distal genes transcription elongation in a specialized subset of operons that encode extracytoplasmic components. RfaH is recruited into a multi-component RNA polymerase complex by the ops element, which is a short conserved DNA sequence located downstream of the main promoter of these operons. Once bound, RfaH suppresses pausing and inhibits Rho-dependent and intrinsic termination at a subset of sites. Termination signals are bypassed, which allows complete synthesis of long RNA chains. Also negatively controls expression and surface presentation of AG43 and possibly another AG43-independent factor that mediates cell-cell interactions and biofilm formation,. The chain is Transcription antitermination protein RfaH from Escherichia coli O6:K15:H31 (strain 536 / UPEC).